The chain runs to 173 residues: MDVTIQHPWFKRPLGPFYPSRLFDQFFGEGLFEYDLLPFLSSTISPYYRQSLFRTVLDSGVSEVRSDRDKFVIFLDVKHFSPEDLTVKVQEDFVEIHGKHNERQDDHGYISREFHRRYRLPSNVDQSALSCSVSADGMLTFSGPKVQSGLDAGHSERAIPVSREEKPSSAPSS.

M1 bears the N-acetylmethionine mark. Residues 1–63 are required for complex formation with BFSP1 and BFSP2; that stretch reads MDVTIQHPWF…RTVLDSGVSE (63 aa). A Deamidated glutamine; partial modification is found at Q6. Phosphoserine is present on S45. Residue Q50 is modified to Deamidated glutamine; partial. The region spanning 52–162 is the sHSP domain; sequence LFRTVLDSGV…GHSERAIPVS (111 aa). K70 is modified (N6-acetyllysine). Q90 bears the Deamidated glutamine; partial mark. K99 is modified (N6-acetyllysine). H100 contacts Zn(2+). At N101 the chain carries Deamidated asparagine; partial. Zn(2+) contacts are provided by E102 and H107. S122 bears the Phosphoserine mark. N123 bears the Deamidated asparagine; partial mark. The disordered stretch occupies residues 144-173; it reads PKVQSGLDAGHSERAIPVSREEKPSSAPSS. A Deamidated glutamine; partial modification is found at Q147. Positions 153-167 are enriched in basic and acidic residues; it reads GHSERAIPVSREEKP. H154 contacts Zn(2+). An O-linked (GlcNAc) serine glycan is attached at S162.

The protein belongs to the small heat shock protein (HSP20) family. In terms of assembly, heteromer composed of three CRYAA and one CRYAB subunits. Inter-subunit bridging via zinc ions enhances stability, which is crucial as there is no protein turn over in the lens. Can also form homodimers and homotetramers (dimers of dimers) which serve as the building blocks of homooligomers. Within homooligomers, the zinc-binding motif is created from residues of 3 different molecules. His-100 and Glu-102 from one molecule are ligands of the zinc ion, and His-107 and His-154 residues from additional molecules complete the site with tetrahedral coordination geometry. Part of a complex required for lens intermediate filament formation composed of BFSP1, BFSP2 and CRYAA. Post-translationally, acetylation at Lys-70 may increase chaperone activity. In terms of processing, undergoes age-dependent proteolytical cleavage at the C-terminus.

It is found in the cytoplasm. Its subcellular location is the nucleus. In terms of biological role, contributes to the transparency and refractive index of the lens. Acts as a chaperone, preventing aggregation of various proteins under a wide range of stress conditions. Required for the correct formation of lens intermediate filaments as part of a complex composed of BFSP1, BFSP2 and CRYAA. This Otolemur crassicaudatus (Brown greater galago) protein is Alpha-crystallin A chain (CRYAA).